We begin with the raw amino-acid sequence, 475 residues long: RNA pseudouridine synthase 3, mitochondrial (475 aa).

The transit peptide at 1 to 15 (MLCRRRRVGAAVRWL) directs the protein to the mitochondrion. The disordered stretch occupies residues 40 to 74 (RLGKPKPGPRPRQLLSLPPFPGGGDGDPLPGRKAA). The 71-residue stretch at 90–160 (ADVPQEVVQA…GEIKKRYETI (71 aa)) folds into the S4 RNA-binding domain. Residue Asp230 is part of the active site.

It belongs to the pseudouridine synthase RluA family.

It is found in the mitochondrion. It carries out the reaction a uridine in RNA = a pseudouridine in RNA. The sequence is that of RNA pseudouridine synthase 3, mitochondrial from Oryza sativa subsp. japonica (Rice).